Reading from the N-terminus, the 235-residue chain is Enolase-phosphatase E1 (235 aa).

The Mg(2+) site is built by Asp-10 and Glu-12. Substrate is bound by residues 130–131 (SS) and Lys-169. Asp-194 contributes to the Mg(2+) binding site.

The protein belongs to the HAD-like hydrolase superfamily. MasA/MtnC family. Monomer. Mg(2+) is required as a cofactor.

It localises to the cytoplasm. Its subcellular location is the nucleus. It catalyses the reaction 5-methylsulfanyl-2,3-dioxopentyl phosphate + H2O = 1,2-dihydroxy-5-(methylsulfanyl)pent-1-en-3-one + phosphate. Its pathway is amino-acid biosynthesis; L-methionine biosynthesis via salvage pathway; L-methionine from S-methyl-5-thio-alpha-D-ribose 1-phosphate: step 3/6. The protein operates within amino-acid biosynthesis; L-methionine biosynthesis via salvage pathway; L-methionine from S-methyl-5-thio-alpha-D-ribose 1-phosphate: step 4/6. In terms of biological role, bifunctional enzyme that catalyzes the enolization of 2,3-diketo-5-methylthiopentyl-1-phosphate (DK-MTP-1-P) into the intermediate 2-hydroxy-3-keto-5-methylthiopentenyl-1-phosphate (HK-MTPenyl-1-P), which is then dephosphorylated to form the acireductone 1,2-dihydroxy-3-keto-5-methylthiopentene (DHK-MTPene). The polypeptide is Enolase-phosphatase E1 (Komagataella phaffii (strain GS115 / ATCC 20864) (Yeast)).